Here is a 137-residue protein sequence, read N- to C-terminus: Small ribosomal subunit protein uS12 (137 aa).

The tract at residues 1–26 (MPTINQLVTKGRKRKASKTKSPALNQ) is disordered.

This sequence belongs to the universal ribosomal protein uS12 family. Part of the 30S ribosomal subunit. Contacts proteins S8 and S17. May interact with IF1 in the 30S initiation complex.

Functionally, with S4 and S5 plays an important role in translational accuracy. In terms of biological role, interacts with and stabilizes bases of the 16S rRNA that are involved in tRNA selection in the A site and with the mRNA backbone. Located at the interface of the 30S and 50S subunits, it traverses the body of the 30S subunit contacting proteins on the other side and probably holding the rRNA structure together. The combined cluster of proteins S8, S12 and S17 appears to hold together the shoulder and platform of the 30S subunit. This is Small ribosomal subunit protein uS12 from Mycoplasmopsis pulmonis (strain UAB CTIP) (Mycoplasma pulmonis).